The chain runs to 123 residues: Small ribosomal subunit protein uS12 (123 aa).

Position 89 is a 3-methylthioaspartic acid (aspartate 89).

This sequence belongs to the universal ribosomal protein uS12 family. As to quaternary structure, part of the 30S ribosomal subunit. Contacts proteins S8 and S17. May interact with IF1 in the 30S initiation complex.

Its function is as follows. With S4 and S5 plays an important role in translational accuracy. In terms of biological role, interacts with and stabilizes bases of the 16S rRNA that are involved in tRNA selection in the A site and with the mRNA backbone. Located at the interface of the 30S and 50S subunits, it traverses the body of the 30S subunit contacting proteins on the other side and probably holding the rRNA structure together. The combined cluster of proteins S8, S12 and S17 appears to hold together the shoulder and platform of the 30S subunit. The sequence is that of Small ribosomal subunit protein uS12 from Nitrobacter winogradskyi (strain ATCC 25391 / DSM 10237 / CIP 104748 / NCIMB 11846 / Nb-255).